The chain runs to 600 residues: Aspartate--tRNA(Asp/Asn) ligase (600 aa).

Glutamate 174 serves as a coordination point for L-aspartate. The tract at residues 198 to 201 (QLFK) is aspartate. An L-aspartate-binding site is contributed by arginine 220. Residues 220 to 222 (RDE) and glutamine 229 each bind ATP. Residue histidine 457 participates in L-aspartate binding. Position 491 (glutamate 491) interacts with ATP. Residue arginine 498 participates in L-aspartate binding. Residue 543-546 (GLDR) coordinates ATP.

The protein belongs to the class-II aminoacyl-tRNA synthetase family. Type 1 subfamily. As to quaternary structure, homodimer.

The protein localises to the cytoplasm. The catalysed reaction is tRNA(Asx) + L-aspartate + ATP = L-aspartyl-tRNA(Asx) + AMP + diphosphate. Functionally, aspartyl-tRNA synthetase with relaxed tRNA specificity since it is able to aspartylate not only its cognate tRNA(Asp) but also tRNA(Asn). Reaction proceeds in two steps: L-aspartate is first activated by ATP to form Asp-AMP and then transferred to the acceptor end of tRNA(Asp/Asn). The polypeptide is Aspartate--tRNA(Asp/Asn) ligase (Burkholderia ambifaria (strain ATCC BAA-244 / DSM 16087 / CCUG 44356 / LMG 19182 / AMMD) (Burkholderia cepacia (strain AMMD))).